The chain runs to 125 residues: uncharacterized protein (125 aa).

This is an uncharacterized protein from Acanthamoeba polyphaga (Amoeba).